Consider the following 444-residue polypeptide: S-locus-specific glycoprotein BS29-1 (444 aa).

A signal peptide spans 1–28 (MRGVIPNYHHSYTLLFFVILVLFPHVFS). The Bulb-type lectin domain occupies 31-159 (TLSPNEALTI…KTTALDRFMW (129 aa)). 5 N-linked (GlcNAc...) asparagine glycosylation sites follow: Asn43, Asn125, Asn180, Asn243, and Asn396. The PAN domain occupies 356–437 (CGEGDGFLRM…GGQDLYLKVA (82 aa)). 2 cysteine pairs are disulfide-bonded: Cys387–Cys412 and Cys395–Cys397.

As to expression, stigma.

Functionally, involved in sporophytic self-incompatibility system (the inability of flowering plants to achieve self-fertilization). The chain is S-locus-specific glycoprotein BS29-1 (SLSG) from Brassica oleracea var. alboglabra (Chinese kale).